The following is a 427-amino-acid chain: MSAWRAPEVGSRLGRRVLWCLLWLLAGVALGYVAWRLFGHTPYRIDIDIYQMGARAWLDGRPLYGGGVLFHTPIGLNLPFTYPPLAAVLFSPFAWLQMPAASVAITVLTLVLLIASTAIVLTGLDAWPTSRLVPAPARLRRLWLAVLIVAPATIWLEPISSNFAFGQINVVLMTLVIVDCFPRRTPWPRGLMLGLGIALKLTPAVFLLYFLLRRDGRAALTALASFAVATLLGFVLAWRDSWEYWTHTLHHTDRIGAAALNTDQNIAGALARLTIGDDERFALWVAGSLLVLAATIWAMRRVLRAGEPTLAVICVALFGLVVSPVSWSHHWVWMLPAVLVIGLLGWRRRNVALAMLSLAGVVLMRWTPIDLLPQHRETTAVWWRQLAGMSYVWWALAVIVVAGLTVTARMTPQRSLTRGLTPAPTAS.

10 consecutive transmembrane segments (helical) span residues 18 to 38 (LWCL…WRLF), 101 to 121 (ASVA…AIVL), 143 to 163 (WLAV…SSNF), 191 to 211 (LMLG…LYFL), 218 to 238 (AALT…VLAW), 279 to 299 (ERFA…IWAM), 308 to 328 (PTLA…VSWS), 331 to 346 (WVWM…LLGW), 351 to 371 (VALA…PIDL), and 386 to 406 (LAGM…GLTV).

It belongs to the glycosyltransferase 87 family.

It is found in the cell membrane. The protein operates within phospholipid metabolism; phosphatidylinositol metabolism. Functionally, responsible for the addition of alpha-(1-2) mannose branches to the linear mannan core on the biosynthetic pathway to mature lipoarabinomannan (LAM). In Mycobacterium tuberculosis (strain ATCC 25618 / H37Rv), this protein is Polyprenol-phosphate-mannose-dependent alpha-(1-2)-phosphatidylinositol mannoside mannosyltransferase.